The sequence spans 214 residues: Leucyl/phenylalanyl-tRNA--protein transferase (214 aa).

Belongs to the L/F-transferase family.

It is found in the cytoplasm. It carries out the reaction N-terminal L-lysyl-[protein] + L-leucyl-tRNA(Leu) = N-terminal L-leucyl-L-lysyl-[protein] + tRNA(Leu) + H(+). The enzyme catalyses N-terminal L-arginyl-[protein] + L-leucyl-tRNA(Leu) = N-terminal L-leucyl-L-arginyl-[protein] + tRNA(Leu) + H(+). The catalysed reaction is L-phenylalanyl-tRNA(Phe) + an N-terminal L-alpha-aminoacyl-[protein] = an N-terminal L-phenylalanyl-L-alpha-aminoacyl-[protein] + tRNA(Phe). Functions in the N-end rule pathway of protein degradation where it conjugates Leu, Phe and, less efficiently, Met from aminoacyl-tRNAs to the N-termini of proteins containing an N-terminal arginine or lysine. This chain is Leucyl/phenylalanyl-tRNA--protein transferase, found in Cereibacter sphaeroides (strain ATCC 17023 / DSM 158 / JCM 6121 / CCUG 31486 / LMG 2827 / NBRC 12203 / NCIMB 8253 / ATH 2.4.1.) (Rhodobacter sphaeroides).